A 411-amino-acid polypeptide reads, in one-letter code: MDVNGPKRWEPHRSLDLNPRSTPVYKSPLQEPCGVFGNKGTTKMSGVVIDMGTGICKMGFAGQTRPTYIVRNIVGCQPKRRTTMEQPKMEMFIGEAAHARPELTLMHPVRNGIVVDWEAAEFIWRHILENDLRLDTQDHPLLFTDPPFNPASNREKLVEVAFESLHSPAIYVASQSVLSVYANGRVNGLVVDTGHGVSYTVPVFQGYNLPSGIQRMDLAGHYLTKFLAEKILRSSFAVKKEDMDTMENIKQQYCYVALDFQKEQGRPDEKFRRCLKLPDGQMITVGKELFQCPELLFHPPDTSGPSSLGLPSMVEHSLSTVPQELRADMEQNVLLCGGSSLFTGFEGRFKTELLRRLGPEAHVVVVAQANRNLSVWIGGSILASLCAFQTRWVLREQYEEHGPDIVLRKCS.

A compositionally biased stretch (basic and acidic residues) spans 1 to 15 (MDVNGPKRWEPHRSL). The segment at 1–23 (MDVNGPKRWEPHRSLDLNPRSTP) is disordered.

This sequence belongs to the actin family. As to quaternary structure, interacts with ACTL7A.

The protein localises to the cytoplasmic vesicle. The protein resides in the secretory vesicle. It localises to the acrosome. Its subcellular location is the cytoplasm. It is found in the cytoskeleton. The protein localises to the perinuclear theca. Testis-specic protein that plays an important role in fusion of proacrosomal vesicles and perinuclear theca formation. The sequence is that of Actin-like protein 9 (Actl9) from Rattus norvegicus (Rat).